The sequence spans 204 residues: Probable peptidyl-tRNA hydrolase (204 aa).

The active-site Proton acceptor is the histidine 36. Residues asparagine 86 and asparagine 132 each contribute to the tRNA site.

Belongs to the PTH family.

It carries out the reaction an N-acyl-L-alpha-aminoacyl-tRNA + H2O = an N-acyl-L-amino acid + a tRNA + H(+). Functionally, peptidyl-tRNA hydrolase that cleaves nascent chains-tRNAs that are not stably fixed in the P-site of 60S ribosome-nascent chain complexes. Acts downstream of the ribosome-associated quality control (RQC) pathway to release non-ubiquitinated nascent chains from 60S and 80S ribosome-nascent chain complexes. Does not act on ubiquitinated nascent chains, which are cleaved by ANKZF1 for degradation. This is Probable peptidyl-tRNA hydrolase from Mus musculus (Mouse).